Consider the following 268-residue polypeptide: Large ribosomal subunit protein mL46 (268 aa).

Residues 1–25 (MYLKRNIINMQRSFSRQFHISVRNS) constitute a mitochondrion transit peptide.

The protein belongs to the mitochondrion-specific ribosomal protein mL46 family. Component of the mitochondrial large ribosomal subunit (mt-LSU). Mature yeast 74S mitochondrial ribosomes consist of a small (37S) and a large (54S) subunit. The 37S small subunit contains a 15S ribosomal RNA (15S mt-rRNA) and at least 32 different proteins. The 54S large subunit contains a 21S rRNA (21S mt-rRNA) and at least 45 different proteins.

Its subcellular location is the mitochondrion. Functionally, component of the mitochondrial ribosome (mitoribosome), a dedicated translation machinery responsible for the synthesis of mitochondrial genome-encoded proteins, including at least some of the essential transmembrane subunits of the mitochondrial respiratory chain. The mitoribosomes are attached to the mitochondrial inner membrane and translation products are cotranslationally integrated into the membrane. This chain is Large ribosomal subunit protein mL46 (mrpl17), found in Schizosaccharomyces pombe (strain 972 / ATCC 24843) (Fission yeast).